The following is an 88-amino-acid chain: Conotoxin tx9a (88 aa).

An N-terminal signal peptide occupies residues 1–27 (MHLSLARSAVLMLLLLFALGNFVVVQS). A propeptide spanning residues 28–58 (GQITRDVDNGQLTDNRRNLQSKWKPVSLYMS) is cleaved from the precursor. Intrachain disulfides connect cysteine 62/cysteine 76, cysteine 66/cysteine 78, and cysteine 72/cysteine 83. 2 positions are modified to 4-carboxyglutamate; partial: glutamate 68 and glutamate 73. An Asparagine amide modification is found at asparagine 87.

In terms of processing, exists in 4 different forms, depending on gamma-carboxyglutamations. Tx9a-EE does not contain gamma-carboxyglutamate, tx9a-E/gamma has one gamma-carboxyglutamate at position 73, tx9a-gamma/E has one gamma-carboxyglutamate at position 68, and tx9a-agmma/gamma has two gamma-carboxyglutamates at positions 68 and 73. Expressed by the venom duct. All different gamma-carboxyalted forms are mostly present in part 2, part 3 and part 4 of the venom duct. They are also found in part 1 (proximal part near the venom bulb) and part 5, but in lower quantity.

Its subcellular location is the secreted. Its function is as follows. Neurotoxin. In vivo, intracranial injection into mice of 10 pmol/g of the peptide induces running in circles and hyperactivity. At higher doses (50 pmol/g), the mice exhibit running and climbing symptoms for close to one hour. Between 130 and 150 pmol/g, characteristic 'spasmodic' symptomatology is elicited. A hand clap would make mice jump high and start running rapidly. When exposed to a loud hand clap, or if the cage cover were dropped, the mice lose motor control and exhibit seizure-like symptoms from which they eventually recover. At the highest doses tested (over 250 pmol/g), after the characteristic spasmodic symptomatology, lethality occurs. Injection of a similar dose range intramuscularly into Siamese fighting fish elicited no unusual symptomatology. This Conus textile (Cloth-of-gold cone) protein is Conotoxin tx9a.